Here is a 306-residue protein sequence, read N- to C-terminus: Lipoyl synthase (306 aa).

Residues Cys55, Cys60, Cys66, Cys81, Cys85, Cys88, and Ser294 each coordinate [4Fe-4S] cluster. The 217-residue stretch at 67–283 folds into the Radical SAM core domain; the sequence is WNHRTATFLL…RAYALARGFR (217 aa).

The protein belongs to the radical SAM superfamily. Lipoyl synthase family. [4Fe-4S] cluster is required as a cofactor.

Its subcellular location is the cytoplasm. The catalysed reaction is [[Fe-S] cluster scaffold protein carrying a second [4Fe-4S](2+) cluster] + N(6)-octanoyl-L-lysyl-[protein] + 2 oxidized [2Fe-2S]-[ferredoxin] + 2 S-adenosyl-L-methionine + 4 H(+) = [[Fe-S] cluster scaffold protein] + N(6)-[(R)-dihydrolipoyl]-L-lysyl-[protein] + 4 Fe(3+) + 2 hydrogen sulfide + 2 5'-deoxyadenosine + 2 L-methionine + 2 reduced [2Fe-2S]-[ferredoxin]. It functions in the pathway protein modification; protein lipoylation via endogenous pathway; protein N(6)-(lipoyl)lysine from octanoyl-[acyl-carrier-protein]: step 2/2. Catalyzes the radical-mediated insertion of two sulfur atoms into the C-6 and C-8 positions of the octanoyl moiety bound to the lipoyl domains of lipoate-dependent enzymes, thereby converting the octanoylated domains into lipoylated derivatives. In Chloroflexus aggregans (strain MD-66 / DSM 9485), this protein is Lipoyl synthase.